The chain runs to 220 residues: Deep-sea actinoporin Cjtox I (220 aa).

The N-terminal stretch at 1–19 (MNRLIILCLVAATIYSTIA) is a signal peptide. Residues 20-42 (LPMKEDISNEERPTSVNEKPVKK) constitute a propeptide that is removed on maturation. Residues serine 96, valine 128, serine 146, proline 148, tyrosine 174, tyrosine 178, and tyrosine 179 each contribute to the phosphocholine site. Positions 146-161 (SVPYDYNWYSNWWNIK) are trp-rich region, which is important for the binding to lipid membrane. A Cell attachment site, crucial for protein stability motif is present at residues 185–187 (KGN).

It belongs to the actinoporin family. Sea anemone subfamily. As to quaternary structure, octamer or nonamer in membranes. Monomer in the soluble state. Expressed in tentacles.

The protein localises to the secreted. The protein resides in the nematocyst. It is found in the target cell membrane. Functionally, probably acts in predation. Pore-forming protein that forms cations-selective hydrophilic pores of around 1 nm and causes cytolysis. Pore formation is a multi-step process that involves specific recognition of membrane sphingomyelin (but neither cholesterol nor phosphatidylcholine) using aromatic rich region and adjacent phosphocholine (POC) binding site, firm binding to the membrane (mainly driven by hydrophobic interactions) accompanied by the transfer of the N-terminal region to the lipid-water interface and finally pore formation after oligomerization of monomers. Shows hemolytic activity on equine erythrocytes. Hemolysis is moderately inhibited in presence of sphingomyelin, suggesting that this protein targets sphingomyelin. The polypeptide is Deep-sea actinoporin Cjtox I (Cribrinopsis japonica (Deep-sea anemone)).